The primary structure comprises 238 residues: Flagellar L-ring protein (238 aa).

Residues 1–16 (MNKAILAVAMVLLLAG) form the signal peptide. Residue Cys-17 is the site of N-palmitoyl cysteine attachment. A lipid anchor (S-diacylglycerol cysteine) is attached at Cys-17.

The protein belongs to the FlgH family. In terms of assembly, the basal body constitutes a major portion of the flagellar organelle and consists of four rings (L,P,S, and M) mounted on a central rod.

The protein localises to the cell outer membrane. The protein resides in the bacterial flagellum basal body. In terms of biological role, assembles around the rod to form the L-ring and probably protects the motor/basal body from shearing forces during rotation. This chain is Flagellar L-ring protein, found in Brucella melitensis biotype 2 (strain ATCC 23457).